A 226-amino-acid chain; its full sequence is Gap junction beta-2 protein (226 aa).

The Cytoplasmic portion of the chain corresponds to 1–20 (MDWGGLHTILGGVNKHSTSI). The chain crosses the membrane as a helical span at residues 21-40 (GKIWLTVLFIFRIMILVVAA). At 41–75 (KEVWGDEQADFVCNTLQPGCKNVCYDHYFPISHIR) the chain is on the extracellular side. Intrachain disulfides connect Cys53–Cys180, Cys60–Cys174, and Cys64–Cys169. A helical membrane pass occupies residues 76-98 (LWALQLIFVSTPALLVAMHVAYY). The Cytoplasmic portion of the chain corresponds to 99–131 (RHEKKRKFIRGEIKTEFKDIEEIKKQKVRIEGS). Residues 132-154 (LWWTYTGSIFFRVIFEAAFMYVF) form a helical membrane-spanning segment. Residues 155-192 (YVMYDGFAMQRLVKCNAWPCPNTVDCFVSRPTEKTVFT) are Extracellular-facing. The helical transmembrane segment at 193-215 (VFMIAVSGICILLNVTELCYLLI) threads the bilayer. Over 216-226 (RFCSGKSKKPV) the chain is Cytoplasmic.

This sequence belongs to the connexin family. A connexon is composed of a hexamer of connexins. Interacts with CNST.

The protein resides in the cell membrane. It is found in the cell junction. The protein localises to the gap junction. Its function is as follows. One gap junction consists of a cluster of closely packed pairs of transmembrane channels, the connexons, through which materials of low MW diffuse from one cell to a neighboring cell. In Bos taurus (Bovine), this protein is Gap junction beta-2 protein (GJB2).